The following is a 295-amino-acid chain: Small ribosomal subunit protein uS2 (295 aa).

The segment at 263–295 (KKFSKTKNIDEETNTEFEKALNDADENKNSDNA) is disordered. Residues 278–295 (EFEKALNDADENKNSDNA) show a composition bias toward basic and acidic residues.

The protein belongs to the universal ribosomal protein uS2 family.

In Rickettsia peacockii (strain Rustic), this protein is Small ribosomal subunit protein uS2.